The chain runs to 196 residues: Serine recombinase PinQ (196 aa).

A Resolvase/invertase-type recombinase catalytic domain is found at 3 to 143 (QIFAYCRIST…SGIVRARGAG (141 aa)). The active-site O-(5'-phospho-DNA)-serine intermediate is the S11.

This sequence belongs to the site-specific recombinase resolvase family.

This Escherichia coli (strain K12) protein is Serine recombinase PinQ (pinQ).